The chain runs to 284 residues: Bifunctional protein FolD (284 aa).

NADP(+)-binding positions include Gly164–Ser166 and Ser189.

It belongs to the tetrahydrofolate dehydrogenase/cyclohydrolase family. In terms of assembly, homodimer.

It catalyses the reaction (6R)-5,10-methylene-5,6,7,8-tetrahydrofolate + NADP(+) = (6R)-5,10-methenyltetrahydrofolate + NADPH. The enzyme catalyses (6R)-5,10-methenyltetrahydrofolate + H2O = (6R)-10-formyltetrahydrofolate + H(+). It participates in one-carbon metabolism; tetrahydrofolate interconversion. Catalyzes the oxidation of 5,10-methylenetetrahydrofolate to 5,10-methenyltetrahydrofolate and then the hydrolysis of 5,10-methenyltetrahydrofolate to 10-formyltetrahydrofolate. The protein is Bifunctional protein FolD of Listeria monocytogenes serotype 4b (strain F2365).